We begin with the raw amino-acid sequence, 508 residues long: MAP kinase kinase MKK1/SSP32 (508 aa).

Disordered stretches follow at residues 1–21 (MASL…PRLK), 35–95 (IYLT…LSIN), and 130–158 (ELSG…YLRN). Residues 35–47 (IYLTSNGSSTTAY) show a composition bias toward polar residues. Positions 48-66 (SSHTPEPLTSSTSTLFSQT) are enriched in low complexity. Polar residues-rich tracts occupy residues 67 to 79 (RLHP…TLNT) and 131 to 158 (LSGN…YLRN). Residue Ser192 is modified to Phosphoserine. The Protein kinase domain occupies 221–488 (IETLGILGEG…PRQMINHPWI (268 aa)). ATP-binding positions include 227–235 (LGEGAGGSV) and Lys250. Residue Asp349 is the Proton acceptor of the active site.

This sequence belongs to the protein kinase superfamily. STE Ser/Thr protein kinase family. MAP kinase kinase subfamily.

The catalysed reaction is L-seryl-[protein] + ATP = O-phospho-L-seryl-[protein] + ADP + H(+). The enzyme catalyses L-threonyl-[protein] + ATP = O-phospho-L-threonyl-[protein] + ADP + H(+). It carries out the reaction L-tyrosyl-[protein] + ATP = O-phospho-L-tyrosyl-[protein] + ADP + H(+). Involved in a signal transduction pathway that play a role in yeast cell morphogenesis and cell growth. This pathway seems to start by SMP3; then involve the kinase PKC1 that may act on the BCK1 kinase that then phosphorylates MKK1 and MKK2 which themselves phosphorylate the MPK1 kinase. This Saccharomyces cerevisiae (strain ATCC 204508 / S288c) (Baker's yeast) protein is MAP kinase kinase MKK1/SSP32 (MKK1).